Here is a 447-residue protein sequence, read N- to C-terminus: Ion-translocating oxidoreductase complex subunit C (447 aa).

2 consecutive 4Fe-4S ferredoxin-type domains span residues 359 to 389 (AEVL…GRIA) and 399 to 430 (RCRE…LIRY). [4Fe-4S] cluster is bound by residues cysteine 369, cysteine 372, cysteine 375, cysteine 379, cysteine 408, cysteine 411, cysteine 414, and cysteine 418.

Belongs to the 4Fe4S bacterial-type ferredoxin family. RnfC subfamily. In terms of assembly, the Rnf complex is probably composed of eight subunits, including RnfA, RnfB, RnfC, RnfD, RnfE and RnfG. Requires [4Fe-4S] cluster as cofactor.

The protein localises to the cell membrane. Its function is as follows. Part of a membrane-bound complex that couples electron transfer with translocation of ions across the membrane. Catalyzes Na(+) transport, most probably coupled to electron transfer from reduced ferredoxin to methanophenazine and heterodisulfide reductase. Involved in heterodisulfide reduction during methanogenesis from acetate. In Methanosarcina acetivorans (strain ATCC 35395 / DSM 2834 / JCM 12185 / C2A), this protein is Ion-translocating oxidoreductase complex subunit C.